The primary structure comprises 349 residues: Protein-glutamate methylesterase/protein-glutamine glutaminase (349 aa).

The region spanning 5–122 is the Response regulatory domain; that stretch reads RVLSVDDSAL…REGMLAYSEM (118 aa). Aspartate 56 is modified (4-aspartylphosphate). Residues 152–344 form the CheB-type methylesterase domain; it reads LLSSEKLIAI…QQMLAKISAG (193 aa). Residues serine 164, histidine 190, and aspartate 286 contribute to the active site.

It belongs to the CheB family. Phosphorylated by CheA. Phosphorylation of the N-terminal regulatory domain activates the methylesterase activity.

The protein localises to the cytoplasm. The enzyme catalyses [protein]-L-glutamate 5-O-methyl ester + H2O = L-glutamyl-[protein] + methanol + H(+). It catalyses the reaction L-glutaminyl-[protein] + H2O = L-glutamyl-[protein] + NH4(+). Its function is as follows. Involved in chemotaxis. Part of a chemotaxis signal transduction system that modulates chemotaxis in response to various stimuli. Catalyzes the demethylation of specific methylglutamate residues introduced into the chemoreceptors (methyl-accepting chemotaxis proteins or MCP) by CheR. Also mediates the irreversible deamidation of specific glutamine residues to glutamic acid. The polypeptide is Protein-glutamate methylesterase/protein-glutamine glutaminase (Escherichia coli O6:K15:H31 (strain 536 / UPEC)).